The chain runs to 269 residues: 3-methyl-2-oxobutanoate hydroxymethyltransferase (269 aa).

Residues Asp49 and Asp88 each contribute to the Mg(2+) site. 3-methyl-2-oxobutanoate contacts are provided by residues 49–50 (DS), Asp88, and Lys118. Position 120 (Glu120) interacts with Mg(2+). Glu186 serves as the catalytic Proton acceptor.

This sequence belongs to the PanB family. In terms of assembly, homodecamer; pentamer of dimers. Requires Mg(2+) as cofactor.

It localises to the cytoplasm. It carries out the reaction 3-methyl-2-oxobutanoate + (6R)-5,10-methylene-5,6,7,8-tetrahydrofolate + H2O = 2-dehydropantoate + (6S)-5,6,7,8-tetrahydrofolate. Its pathway is cofactor biosynthesis; (R)-pantothenate biosynthesis; (R)-pantoate from 3-methyl-2-oxobutanoate: step 1/2. Functionally, catalyzes the reversible reaction in which hydroxymethyl group from 5,10-methylenetetrahydrofolate is transferred onto alpha-ketoisovalerate to form ketopantoate. This Pelobacter propionicus (strain DSM 2379 / NBRC 103807 / OttBd1) protein is 3-methyl-2-oxobutanoate hydroxymethyltransferase.